The sequence spans 141 residues: uncharacterized protein (141 aa).

5 helical membrane-spanning segments follow: residues 7–27, 34–54, 69–89, 97–117, and 121–141; these read FWALLSAAFAALTAVFAKVGV, FATLIRTVVILCVIAAIVAAT, LFLALSGLATGASWLAYFRAL, VAPLDKLSIVMVAIFGVLFLG, and NLMNWLGVAFIAAGALLLAVF. The 127-residue stretch at 14–140 folds into the EamA domain; that stretch reads AFAALTAVFA…IAAGALLLAV (127 aa).

The protein belongs to the EamA transporter family.

The protein resides in the cell membrane. This is an uncharacterized protein from Sinorhizobium sp.